Here is a 371-residue protein sequence, read N- to C-terminus: Putative 8-amino-7-oxononanoate synthase (371 aa).

Arg21 contacts substrate. Position 108–109 (108–109) interacts with pyridoxal 5'-phosphate; sequence GY. His133 provides a ligand contact to substrate. Pyridoxal 5'-phosphate contacts are provided by residues Ser180, 205 to 208, and 234 to 237; these read DDAH and TLSK. N6-(pyridoxal phosphate)lysine is present on Lys237. Thr333 contributes to the substrate binding site.

It belongs to the class-II pyridoxal-phosphate-dependent aminotransferase family. BioF subfamily. In terms of assembly, homodimer. The cofactor is pyridoxal 5'-phosphate.

The catalysed reaction is 6-carboxyhexanoyl-[ACP] + L-alanine + H(+) = (8S)-8-amino-7-oxononanoate + holo-[ACP] + CO2. Its pathway is cofactor biosynthesis; biotin biosynthesis. Catalyzes the decarboxylative condensation of pimeloyl-[acyl-carrier protein] and L-alanine to produce 8-amino-7-oxononanoate (AON), [acyl-carrier protein], and carbon dioxide. This is Putative 8-amino-7-oxononanoate synthase (bioF) from Bacillus subtilis subsp. natto.